We begin with the raw amino-acid sequence, 303 residues long: Oxygen-dependent coproporphyrinogen-III oxidase (303 aa).

Ser93 serves as a coordination point for substrate. The a divalent metal cation site is built by His97 and His107. His107 functions as the Proton donor in the catalytic mechanism. Asn109 to Arg111 serves as a coordination point for substrate. Residues His149 and His179 each contribute to the a divalent metal cation site. The important for dimerization stretch occupies residues Tyr244–Arg279. Gly262–Arg264 contacts substrate.

Belongs to the aerobic coproporphyrinogen-III oxidase family. Homodimer. A divalent metal cation serves as cofactor.

The protein resides in the cytoplasm. It carries out the reaction coproporphyrinogen III + O2 + 2 H(+) = protoporphyrinogen IX + 2 CO2 + 2 H2O. It participates in porphyrin-containing compound metabolism; protoporphyrin-IX biosynthesis; protoporphyrinogen-IX from coproporphyrinogen-III (O2 route): step 1/1. In terms of biological role, involved in the heme biosynthesis. Catalyzes the aerobic oxidative decarboxylation of propionate groups of rings A and B of coproporphyrinogen-III to yield the vinyl groups in protoporphyrinogen-IX. This chain is Oxygen-dependent coproporphyrinogen-III oxidase, found in Bordetella petrii (strain ATCC BAA-461 / DSM 12804 / CCUG 43448).